A 517-amino-acid polypeptide reads, in one-letter code: Crotonobetaine/carnitine--CoA ligase (517 aa).

The protein belongs to the ATP-dependent AMP-binding enzyme family.

It carries out the reaction 4-(trimethylamino)butanoate + ATP + CoA = 4-(trimethylamino)butanoyl-CoA + AMP + diphosphate. The enzyme catalyses crotonobetaine + ATP + CoA = crotonobetainyl-CoA + AMP + diphosphate. The catalysed reaction is (R)-carnitine + ATP + CoA = (R)-carnitinyl-CoA + AMP + diphosphate. It functions in the pathway amine and polyamine metabolism; carnitine metabolism. Catalyzes the transfer of CoA to carnitine, generating the initial carnitinyl-CoA needed for the CaiB reaction cycle. Also has activity toward crotonobetaine and gamma-butyrobetaine. The protein is Crotonobetaine/carnitine--CoA ligase of Escherichia coli O9:H4 (strain HS).